A 192-amino-acid polypeptide reads, in one-letter code: Potassium channel HX13_20290 (192 aa).

The chain crosses the membrane as a helical span at residues Met1–Glu24. Positions Arg5 to Asp11 match the RxxxFSD motif motif. Leu25 is a topological domain (cytoplasmic). The short helix H1 stretch occupies residues Lys26–Glu29. Residues Lys26–Ile39 lie on the Extracellular side of the membrane. The short helix H2 stretch occupies residues Ser31 to Gln37. A helical membrane pass occupies residues Leu40–Gln65. Residues Thr66–Asn71 are Cytoplasmic-facing. Residues Gly72 to Glu93 form a helical membrane-spanning segment. At Trp94–Ala101 the chain is on the extracellular side. A helical membrane pass occupies residues Gln102–Ile126. At Ile127–Asn133 the chain is on the cytoplasmic side. The helical transmembrane segment at Ser134 to Phe162 threads the bilayer. The Extracellular portion of the chain corresponds to Tyr163–Pro164. Residues Tyr165–Ile180 form a helical membrane-spanning segment. Residues Pro181 to Asn192 are Cytoplasmic-facing.

It belongs to the TMEM175 family. In terms of assembly, homotetramer.

The protein resides in the membrane. The enzyme catalyses K(+)(in) = K(+)(out). Functionally, potassium channel. The polypeptide is Potassium channel HX13_20290 (Chryseobacterium sp. (strain P1-3)).